A 172-amino-acid chain; its full sequence is Adenine phosphoribosyltransferase (172 aa).

Belongs to the purine/pyrimidine phosphoribosyltransferase family. As to quaternary structure, homodimer.

It localises to the cytoplasm. The enzyme catalyses AMP + diphosphate = 5-phospho-alpha-D-ribose 1-diphosphate + adenine. The protein operates within purine metabolism; AMP biosynthesis via salvage pathway; AMP from adenine: step 1/1. Functionally, catalyzes a salvage reaction resulting in the formation of AMP, that is energically less costly than de novo synthesis. This is Adenine phosphoribosyltransferase from Anaeromyxobacter dehalogenans (strain 2CP-C).